A 1050-amino-acid chain; its full sequence is TSC22 domain family protein 1 (1050 aa).

The tract at residues 1–99 (MHQPPESTAA…SQAQLQGQPL (99 aa)) is required for interaction with TGFBR1 and promotion of TGF-beta signaling. Disordered regions lie at residues 22–111 (MAHP…KKSG), 126–285 (ISSN…VSSA), 445–479 (QTPTEASSSERESTSGSSVSSSVSTLSHYTESVGS), 511–531 (DFSSPGPQSISQSQMSQVQLQ), 581–609 (LAQPQLPYPQPAPPVQTPLPGAPPQQLQY), 720–740 (VQPPSTQVTPSVVQQGAPPSS), 795–847 (QLPT…GSLV), and 879–919 (SLAQ…VSDG). A compositionally biased stretch (low complexity) spans 38-55 (ASALSAAGTGVSGAAPSS). Residues 58 to 71 (FPPPSSLLQPPPPA) show a composition bias toward pro residues. The segment covering 85–97 (SLNLLSQAQLQGQ) has biased composition (low complexity). The span at 134-143 (EDTESYDDLD) shows a compositional bias: acidic residues. The segment covering 217–241 (HPHHLHHHHHIHHGHHLHHGHHHSS) has biased composition (basic residues). At Ser265 the chain carries Phosphoserine. Residues 458–476 (TSGSSVSSSVSTLSHYTES) show a composition bias toward low complexity. A compositionally biased stretch (pro residues) spans 586–603 (LPYPQPAPPVQTPLPGAP). The segment covering 906–919 (LSGDSGGVSAVSDG) has biased composition (low complexity). Residues 983–1004 (LKEQIKELIEKNSQLEQENNLL) form a leucine-zipper region. The segment at 1015–1050 (QFQAQLQTGSPPATTQPQGTTQPPAQPASQGSGSTA) is disordered. Residues 1021–1050 (QTGSPPATTQPQGTTQPPAQPASQGSGSTA) are compositionally biased toward low complexity.

The protein belongs to the TSC-22/Dip/Bun family. As to quaternary structure, forms homodimers. Forms heterodimers. Component of a complex composed of TSC22D1 (via N-terminus), TGFBR1 and TGFBR2; the interaction between TSC22D1 and TGFBR1 is inhibited by SMAD7 and promoted by TGFB1. Interacts with SMAD7; the interaction requires TGF-beta and the interaction is inhibited by TGFBR1. Interacts with TPT1/fortilin; interaction results in the destabilization of TSC22D1 protein and prevents TSC22D1-mediated apoptosis. Interacts with SMAD4 (via N-terminus). Interacts with ACVRL1/ALK1, ACVR1/ALK2, BMPR1A/ALK3, ACVR1B/ALK4, BMPR1B/ALK6, ACVR2A/ACTRII, and BMPR2. Interacts with SMAD6. Interacts with TFE3; the interaction is enhanced in the presence of TGF-beta. Forms a heterodimer with TSC22D4/THG1. In terms of assembly, forms a heterodimer with TSC22D4/THG1. Interacts with histone H1-2. Interacts with GNL3. Ubiquitously expressed, abundantly expressed in testis, ovary, uterus, and lung. Expressed in cardiomyocytes.

The protein resides in the cytoplasm. It is found in the nucleus. The protein localises to the cell membrane. It localises to the mitochondrion. Functionally, transcriptional repressor. Acts on the C-type natriuretic peptide (CNP) promoter. Acts to promote CASP3-mediated apoptosis. Positively regulates TGF-beta signaling by interacting with SMAD7 which inhibits binding of SMAD7 to TGFBR1, preventing recruitment of SMURF ubiquitin ligases to TGFBR1 and inhibiting SMURF-mediated ubiquitination and degradation of TGFBR1. Contributes to enhancement of TGF-beta signaling by binding to and modulating the transcription activator activity of SMAD4. Promotes TGF-beta-induced transcription of COL1A2; via its interaction with TFE3 at E-boxes in the gene proximal promoter. Plays a role in the repression of hematopoietic precursor cell growth. Promotes IL2 deprivation-induced apoptosis in T-lymphocytes, via repression of TSC22D3/GILZ transcription and activation of the caspase cascade. In terms of biological role, may act to negatively regulate TGFB3 signaling and thereby inhibit cell death in mammary gland cells. Its function is as follows. Positively regulates cell death in response to TGFB3 during mammary gland involution. In Rattus norvegicus (Rat), this protein is TSC22 domain family protein 1.